A 104-amino-acid chain; its full sequence is DNA-directed RNA polymerase subunit omega (104 aa).

It belongs to the RNA polymerase subunit omega family. As to quaternary structure, the RNAP catalytic core consists of 2 alpha, 1 beta, 1 beta' and 1 omega subunit. When a sigma factor is associated with the core the holoenzyme is formed, which can initiate transcription.

The catalysed reaction is RNA(n) + a ribonucleoside 5'-triphosphate = RNA(n+1) + diphosphate. Functionally, promotes RNA polymerase assembly. Latches the N- and C-terminal regions of the beta' subunit thereby facilitating its interaction with the beta and alpha subunits. This chain is DNA-directed RNA polymerase subunit omega, found in Streptococcus agalactiae serotype Ia (strain ATCC 27591 / A909 / CDC SS700).